The primary structure comprises 302 residues: MNKSALLSPAPFGRLLTAMVTPFDDEGKVDYGLAADLANYLVDQGSDGIVVCGTTGESPTLSWQEQQKLLETVRNSLGSRAKVLAGTGSNSTSEAIEATKEAANSGADGALVVVPYYNKPPQEGLEVHFRAIANAAPKLPLMLYNIPGRTGCSISPSIVSKLMDCSNVVSFKAASGTTEEVTQLRNYCGSDLAIYSGDDALVLPMLSVGAVGVVSVASHLVAPNLKKLIESFLEGKYSEALYLHETLQPLFKSLFATTNPIPVKAALQLIGWSVGPPRSPLVSLNSEMKEELVKILSSLRLI.

Residue threonine 55 coordinates pyruvate. The active-site Proton donor/acceptor is the tyrosine 144. Lysine 172 serves as the catalytic Schiff-base intermediate with substrate. Valine 214 is a pyruvate binding site.

This sequence belongs to the DapA family. In terms of assembly, homotetramer; dimer of dimers.

Its subcellular location is the cytoplasm. It catalyses the reaction L-aspartate 4-semialdehyde + pyruvate = (2S,4S)-4-hydroxy-2,3,4,5-tetrahydrodipicolinate + H2O + H(+). It participates in amino-acid biosynthesis; L-lysine biosynthesis via DAP pathway; (S)-tetrahydrodipicolinate from L-aspartate: step 3/4. Catalyzes the condensation of (S)-aspartate-beta-semialdehyde [(S)-ASA] and pyruvate to 4-hydroxy-tetrahydrodipicolinate (HTPA). The sequence is that of 4-hydroxy-tetrahydrodipicolinate synthase from Prochlorococcus marinus (strain NATL2A).